Here is a 513-residue protein sequence, read N- to C-terminus: ATP synthase subunit alpha (513 aa).

169 to 176 (GDRQTGKT) lines the ATP pocket.

The protein belongs to the ATPase alpha/beta chains family. In terms of assembly, F-type ATPases have 2 components, CF(1) - the catalytic core - and CF(0) - the membrane proton channel. CF(1) has five subunits: alpha(3), beta(3), gamma(1), delta(1), epsilon(1). CF(0) has three main subunits: a(1), b(2) and c(9-12). The alpha and beta chains form an alternating ring which encloses part of the gamma chain. CF(1) is attached to CF(0) by a central stalk formed by the gamma and epsilon chains, while a peripheral stalk is formed by the delta and b chains.

It is found in the cell inner membrane. It carries out the reaction ATP + H2O + 4 H(+)(in) = ADP + phosphate + 5 H(+)(out). Functionally, produces ATP from ADP in the presence of a proton gradient across the membrane. The alpha chain is a regulatory subunit. This Aliivibrio fischeri (strain ATCC 700601 / ES114) (Vibrio fischeri) protein is ATP synthase subunit alpha.